Reading from the N-terminus, the 509-residue chain is Coiled-coil domain-containing protein 181 (509 aa).

Disordered stretches follow at residues 1 to 122 (MDED…EDEE) and 237 to 369 (FLPP…EKKK). 2 stretches are compositionally biased toward basic and acidic residues: residues 22-33 (DLEWLINDKEKS) and 41-56 (ACKK…KENE). Positions 60-69 (ELGQQLSDPD) are enriched in polar residues. Basic and acidic residues-rich tracts occupy residues 70–82 (NSPK…RRND) and 266–275 (IKKEESEAKG). A compositionally biased stretch (polar residues) spans 319 to 333 (RIQSAGVSPVTSTYC). Coiled-coil stretches lie at residues 335–377 (SPRQ…VFKA) and 418–488 (LKKK…RSKQ). Positions 337-369 (RQKELQKQLERKREKLKREEEQRKLEEENEKKK) are enriched in basic and acidic residues.

Belongs to the CCDC181 family. In terms of assembly, homodimer. Interacts with HOOK1. Interacts with HOOK2. Interacts with HOOK3. Predominantly expressed in testis. Expressed at lower level in brain, eye, trachea and lung. Barely expressed in tongue, heart, liver, kidney, spleen and muscle. Present at high level in elongating spermatids, whereas lower levels are observed in round spermatids (at protein level).

The protein localises to the cytoplasm. Its subcellular location is the cytoskeleton. The protein resides in the cell projection. It is found in the cilium. It localises to the flagellum. In terms of biological role, microtubule-binding protein that localizes to the microtubular manchette of elongating spermatids. The protein is Coiled-coil domain-containing protein 181 of Mus musculus (Mouse).